An 89-amino-acid chain; its full sequence is Small ribosomal subunit protein uS15 (89 aa).

It belongs to the universal ribosomal protein uS15 family. As to quaternary structure, part of the 30S ribosomal subunit. Forms a bridge to the 50S subunit in the 70S ribosome, contacting the 23S rRNA.

In terms of biological role, one of the primary rRNA binding proteins, it binds directly to 16S rRNA where it helps nucleate assembly of the platform of the 30S subunit by binding and bridging several RNA helices of the 16S rRNA. Forms an intersubunit bridge (bridge B4) with the 23S rRNA of the 50S subunit in the ribosome. This Bacillus licheniformis (strain ATCC 14580 / DSM 13 / JCM 2505 / CCUG 7422 / NBRC 12200 / NCIMB 9375 / NCTC 10341 / NRRL NRS-1264 / Gibson 46) protein is Small ribosomal subunit protein uS15.